The chain runs to 763 residues: Photosystem I P700 chlorophyll a apoprotein A1 (763 aa).

8 helical membrane-spanning segments follow: residues 72-95, 158-181, 197-221, 305-323, 360-383, 399-425, 447-469, and 544-562; these read IFSAHFGHLAVIFIWLSGAYFHGA, LYVTAIGALVMAGLMLFAGWFHYH, LNHHLAGLLGLGSLSWAGHQIHVSL, TAHHHLAIAVLFIVAGHMY, WHAQLSINLAILGSISIIVAHHMY, LSLFTHHIWIGGFLIVGAGAHAAIFMV, AIISHLNWVCIWLGFHSFGLYIH, and FMVHHIHAFTIHVTALILL. Cys586 and Cys595 together coordinate [4Fe-4S] cluster. A run of 2 helical transmembrane segments spans residues 602–623 and 677–699; these read HVFLGLFWMYNSLSIVIFHYSW and TSAYGLLFLGAHFVWAFSLMFLF. His688 is a chlorophyll a' binding site. Chlorophyll a is bound by residues Met696 and Tyr704. Trp705 is a phylloquinone binding site. Residues 737-757 form a helical membrane-spanning segment; the sequence is AVGVAHYLLGGIVTTWSFFLA.

The protein belongs to the PsaA/PsaB family. In terms of assembly, the PsaA/B heterodimer binds the P700 chlorophyll special pair and subsequent electron acceptors. PSI consists of a core antenna complex that captures photons, and an electron transfer chain that converts photonic excitation into a charge separation. The cyanobacterial PSI reaction center is composed of one copy each of PsaA,B,C,D,E,F,I,J,K,L,M and X, and forms trimeric complexes. PSI electron transfer chain: 5 chlorophyll a, 1 chlorophyll a', 2 phylloquinones and 3 4Fe-4S clusters. PSI core antenna: 90 chlorophyll a, 22 carotenoids, 3 phospholipids and 1 galactolipid. P700 is a chlorophyll a/chlorophyll a' dimer, A0 is one or more chlorophyll a, A1 is one or both phylloquinones and FX is a shared 4Fe-4S iron-sulfur center. is required as a cofactor.

It is found in the cellular thylakoid membrane. The enzyme catalyses reduced [plastocyanin] + hnu + oxidized [2Fe-2S]-[ferredoxin] = oxidized [plastocyanin] + reduced [2Fe-2S]-[ferredoxin]. Functionally, psaA and PsaB bind P700, the primary electron donor of photosystem I (PSI), as well as the electron acceptors A0, A1 and FX. PSI is a plastocyanin/cytochrome c6-ferredoxin oxidoreductase, converting photonic excitation into a charge separation, which transfers an electron from the donor P700 chlorophyll pair to the spectroscopically characterized acceptors A0, A1, FX, FA and FB in turn. Oxidized P700 is reduced on the lumenal side of the thylakoid membrane by plastocyanin or cytochrome c6. The polypeptide is Photosystem I P700 chlorophyll a apoprotein A1 (Synechococcus elongatus (strain ATCC 33912 / PCC 7942 / FACHB-805) (Anacystis nidulans R2)).